The following is a 335-amino-acid chain: Anthranilate phosphoribosyltransferase 2 (335 aa).

Residues Gly70, 73–74 (GD), Thr78, 80–83 (NIST), 98–106 (KHGNRSASS), and Ser110 contribute to the 5-phospho-alpha-D-ribose 1-diphosphate site. Gly70 contacts anthranilate. Mg(2+) is bound at residue Ser82. Position 101 (Asn101) interacts with anthranilate. Residue Arg156 participates in anthranilate binding. Residues Asp215 and Glu216 each coordinate Mg(2+).

It belongs to the anthranilate phosphoribosyltransferase family. As to quaternary structure, homodimer. Mg(2+) serves as cofactor.

It carries out the reaction N-(5-phospho-beta-D-ribosyl)anthranilate + diphosphate = 5-phospho-alpha-D-ribose 1-diphosphate + anthranilate. The protein operates within amino-acid biosynthesis; L-tryptophan biosynthesis; L-tryptophan from chorismate: step 2/5. Functionally, catalyzes the transfer of the phosphoribosyl group of 5-phosphorylribose-1-pyrophosphate (PRPP) to anthranilate to yield N-(5'-phosphoribosyl)-anthranilate (PRA). This Streptomyces coelicolor (strain ATCC BAA-471 / A3(2) / M145) protein is Anthranilate phosphoribosyltransferase 2.